The chain runs to 141 residues: uncharacterized protein (141 aa).

Transmembrane regions (helical) follow at residues 7–27, 47–67, 75–95, and 106–126; these read VAIM…AASL, SAVG…MLGV, AVLC…ILMF, and VIFV…WFVA.

It is found in the cell membrane. This is an uncharacterized protein from Bacillus subtilis (strain 168).